The primary structure comprises 201 residues: Recombination protein RecR (201 aa).

The C4-type zinc finger occupies Cys-60–Cys-75. The 96-residue stretch at Ser-83–Pro-178 folds into the Toprim domain.

This sequence belongs to the RecR family.

Functionally, may play a role in DNA repair. It seems to be involved in an RecBC-independent recombinational process of DNA repair. It may act with RecF and RecO. The sequence is that of Recombination protein RecR from Methylobacterium nodulans (strain LMG 21967 / CNCM I-2342 / ORS 2060).